Here is a 230-residue protein sequence, read N- to C-terminus: PKHD-type hydroxylase XF_0598 (230 aa).

One can recognise a Fe2OG dioxygenase domain in the interval 78–182; sequence RTLPPRFNCY…RIASFFWVQS (105 aa). Residues His-96, Asp-98, and His-163 each coordinate Fe cation. Position 173 (Arg-173) interacts with 2-oxoglutarate.

Fe(2+) serves as cofactor. L-ascorbate is required as a cofactor.

This chain is PKHD-type hydroxylase XF_0598, found in Xylella fastidiosa (strain 9a5c).